The following is a 204-amino-acid chain: FMN-dependent NADH:quinone oxidoreductase (204 aa).

FMN is bound by residues Ser10, 16 to 18 (SIS), and 96 to 99 (MYNF).

It belongs to the azoreductase type 1 family. As to quaternary structure, homodimer. It depends on FMN as a cofactor.

It carries out the reaction 2 a quinone + NADH + H(+) = 2 a 1,4-benzosemiquinone + NAD(+). The catalysed reaction is N,N-dimethyl-1,4-phenylenediamine + anthranilate + 2 NAD(+) = 2-(4-dimethylaminophenyl)diazenylbenzoate + 2 NADH + 2 H(+). Functionally, quinone reductase that provides resistance to thiol-specific stress caused by electrophilic quinones. In terms of biological role, also exhibits azoreductase activity. Catalyzes the reductive cleavage of the azo bond in aromatic azo compounds to the corresponding amines. The protein is FMN-dependent NADH:quinone oxidoreductase of Herminiimonas arsenicoxydans.